Here is a 413-residue protein sequence, read N- to C-terminus: MAPPSVFAEVPQAQPVLVFKLTADFREDPDPRKVNLGVGAYRTDDCHPWVLPVVKKVEQKIANDNSLNHEYLPILGLAEFRSCASRLALGDDSPALKEKRVGGVQSLGGTGALRIGADFLARWYNGTNNKNTPVYVSSPTWENHNAVFSAAGFKDIRSYRYWDAEKRGLDLQGFLNDLENAPEFSIVVLHACAHNPTGIDPTPEQWKQIASVMKHRFLFPFFDSAYQGFASGNLERDAWAIRYFVSEGFEFFCAQSFSKNFGLYNERVGNLTVVGKEPESILQVLSQMEKIVRITWSNPPAQGARIVASTLSNPELFEEWTGNVKTMADRILSMRSELRARLEALKTPGTWNHITDQIGMFSFTGLNPKQVEYLVNEKHIYLLPSGRINVSGLTTKNLDYVATSIHEAVTKIQ.

2 residues coordinate L-aspartate: G39 and W141. Position 149 is a phosphoserine (S149). N195 contributes to the L-aspartate binding site. Position 259 is an N6-(pyridoxal phosphate)lysine (K259). R387 contributes to the L-aspartate binding site.

It belongs to the class-I pyridoxal-phosphate-dependent aminotransferase family. In terms of assembly, homodimer. Pyridoxal 5'-phosphate is required as a cofactor.

It is found in the cytoplasm. The enzyme catalyses L-aspartate + 2-oxoglutarate = oxaloacetate + L-glutamate. It carries out the reaction L-cysteine + 2-oxoglutarate = 2-oxo-3-sulfanylpropanoate + L-glutamate. The catalysed reaction is (2S)-2-aminobutanoate + 2-oxoglutarate = 2-oxobutanoate + L-glutamate. It catalyses the reaction 3-sulfino-L-alanine + 2-oxoglutarate = 3-sulfinopyruvate + L-glutamate. Its function is as follows. Biosynthesis of L-glutamate from L-aspartate or L-cysteine. Important regulator of levels of glutamate, the major excitatory neurotransmitter of the vertebrate central nervous system. Acts as a scavenger of glutamate in brain neuroprotection. The aspartate aminotransferase activity is involved in hepatic glucose synthesis during development and in adipocyte glyceroneogenesis. Using L-cysteine as substrate, regulates levels of mercaptopyruvate, an important source of hydrogen sulfide. Mercaptopyruvate is converted into H(2)S via the action of 3-mercaptopyruvate sulfurtransferase (3MST). Hydrogen sulfide is an important synaptic modulator and neuroprotectant in the brain. This is Aspartate aminotransferase, cytoplasmic from Pan troglodytes (Chimpanzee).